Consider the following 395-residue polypeptide: Elongation factor Tu (395 aa).

One can recognise a tr-type G domain in the interval 10–204 (KEHANIGTIG…AVDDYIPTPE (195 aa)). The G1 stretch occupies residues 19 to 26 (GHVDHGKT). GTP is bound at residue 19–26 (GHVDHGKT). Mg(2+) is bound at residue T26. The segment at 60–64 (GITIN) is G2. Residues 81–84 (DCPG) form a G3 region. Residues 81–85 (DCPGH) and 136–139 (NKAD) contribute to the GTP site. Residues 136-139 (NKAD) form a G4 region. The segment at 174–176 (SAL) is G5.

This sequence belongs to the TRAFAC class translation factor GTPase superfamily. Classic translation factor GTPase family. EF-Tu/EF-1A subfamily. Monomer.

Its subcellular location is the cytoplasm. The enzyme catalyses GTP + H2O = GDP + phosphate + H(+). Functionally, GTP hydrolase that promotes the GTP-dependent binding of aminoacyl-tRNA to the A-site of ribosomes during protein biosynthesis. This chain is Elongation factor Tu, found in Staphylococcus carnosus (strain TM300).